Reading from the N-terminus, the 315-residue chain is Taste receptor type 2 member 3 (315 aa).

Residues M1–E5 are Extracellular-facing. A helical transmembrane segment spans residues G6–I26. Topologically, residues E27–S41 are cytoplasmic. Residues L42–L62 traverse the membrane as a helical segment. Topologically, residues T63 to H93 are extracellular. The helical transmembrane segment at L94–S114 threads the bilayer. Topologically, residues H115–R127 are cytoplasmic. Residues V128–I148 traverse the membrane as a helical segment. The Extracellular segment spans residues N149 to T185. N165 is a glycosylation site (N-linked (GlcNAc...) asparagine). The chain crosses the membrane as a helical span at residues L186–L206. Topologically, residues G207–R233 are cytoplasmic. Residues I234–F254 form a helical membrane-spanning segment. Over G255–K265 the chain is Extracellular. The chain crosses the membrane as a helical span at residues M266–G286. The Cytoplasmic segment spans residues N287–S315.

It belongs to the G-protein coupled receptor T2R family.

It localises to the membrane. Functionally, gustducin-coupled receptor implicated in the perception of bitter compounds in the oral cavity and the gastrointestinal tract. Signals through PLCB2 and the calcium-regulated cation channel TRPM5. This chain is Taste receptor type 2 member 3 (TAS2R3), found in Gorilla gorilla gorilla (Western lowland gorilla).